The chain runs to 195 residues: Myelin-associated neurite-outgrowth inhibitor (195 aa).

The Cytoplasmic segment spans residues Met-1–Lys-18. The chain crosses the membrane as a helical span at residues Gly-19 to Pro-43. The Extracellular segment spans residues Gly-44–Asn-143. The chain crosses the membrane as a helical span at residues Gly-144 to Leu-163. At Thr-164–Trp-195 the chain is on the cytoplasmic side.

It belongs to the FAM168 family.

Its subcellular location is the cytoplasm. The protein resides in the perinuclear region. The protein localises to the cell membrane. It is found in the cell projection. It localises to the axon. Inhibitor of neuronal axonal outgrowth. This is Myelin-associated neurite-outgrowth inhibitor (fam168b) from Danio rerio (Zebrafish).